The following is an 82-amino-acid chain: Small ribosomal subunit protein bS18 (82 aa).

The segment at 1-21 (MKRNNSKKVRVEPTRRPKKNP) is disordered.

This sequence belongs to the bacterial ribosomal protein bS18 family. As to quaternary structure, part of the 30S ribosomal subunit. Forms a tight heterodimer with protein bS6.

Binds as a heterodimer with protein bS6 to the central domain of the 16S rRNA, where it helps stabilize the platform of the 30S subunit. The polypeptide is Small ribosomal subunit protein bS18 (Corynebacterium kroppenstedtii (strain DSM 44385 / JCM 11950 / CIP 105744 / CCUG 35717)).